Here is a 1224-residue protein sequence, read N- to C-terminus: Potassium channel subfamily T member 1 (1224 aa).

Residues 1-37 form a disordered region; the sequence is MARAKLPRSPSEGKAGPGDTPAGAAAPEEPHGLSPLL. The Cytoplasmic portion of the chain corresponds to 1–79; the sequence is MARAKLPRSP…LFFIKNQRSS (79 aa). Over residues 13–27 the composition is skewed to low complexity; the sequence is GKAGPGDTPAGAAAP. Residues 80-112 form a helical membrane-spanning segment; that stretch reads LRIRLFNFSLKLLTCLLYIVRVLLDNPDQGIGC. Topologically, residues 113–139 are extracellular; that stretch reads WGCTKYNYTFNGSSSEFHWAPILWVER. Asn-119 and Asn-123 each carry an N-linked (GlcNAc...) asparagine glycan. The chain crosses the membrane as a helical span at residues 140-164; the sequence is KMALWVIQVIVATISFLETMLIIYL. At 165–178 the chain is on the cytoplasmic side; sequence SYKGNIWEQIFHVS. A helical transmembrane segment spans residues 179 to 194; the sequence is FVLEMINTLPFIITVF. The Extracellular portion of the chain corresponds to 195–201; it reads WPPLRNL. A helical membrane pass occupies residues 202-219; it reads FIPVFLNCWLAKHALENM. Topologically, residues 220 to 232 are cytoplasmic; the sequence is INDFHRAILRTQS. A helical transmembrane segment spans residues 233–260; that stretch reads AMFNQVLILFCTLLCLVFTGTCGIQHLE. Residues 261-267 are Extracellular-facing; that stretch reads RAGGNLN. Residues 268–288 constitute an intramembrane region (pore-forming); sequence LLTSFYFCIVTFSTVGFGDVT. Positions 282 and 283 each coordinate K(+). Residues 289 to 290 lie on the Extracellular side of the membrane; sequence PK. The chain crosses the membrane as a helical span at residues 291–324; it reads IWPSQLLVVILICVTLVVLPLQFEELVYLWMERQ. Over 325–1224 the chain is Cytoplasmic; it reads KSGGNYSRHR…NPETRDETQL (900 aa). An RCK N-terminal 1 domain is found at 338–474; the sequence is EKHVVLCVSS…FHVKFADHVV (137 aa). Residues Leu-499, His-502, Ser-524, and Asn-526 each contribute to the Na(+) site. Positions 644-675 are disordered; that stretch reads QNTDCRPSQGGSGGDGTKLTLPTENGSGSRRP. Positions 663 to 673 are enriched in polar residues; that stretch reads TLPTENGSGSR. 2 residues coordinate Zn(2+): Cys-744 and Cys-745. Residues Arg-747 and Lys-750 each coordinate K(+). Residues Arg-747 and Lys-750 each coordinate Na(+). Zn(2+) is bound by residues Cys-752 and His-754. K(+) contacts are provided by Asn-755, Tyr-757, Tyr-763, and Gly-764. Tyr-757 serves as a coordination point for Na(+). Phe-765 contacts Na(+). Residues 767-907 enclose the RCK N-terminal 2 domain; sequence NKLIIVSAET…QFRAKDSYSL (141 aa). The K(+) site is built by Ser-773, Leu-804, Asp-806, Gly-828, and Asp-851. Disordered regions lie at residues 1038-1066 and 1198-1224; these read REAK…ADPV and SSSQ…ETQL. Composition is skewed to low complexity over residues 1045–1055 and 1198–1215; these read GTRAASGSGST and SSSQ…SSCN.

The protein belongs to the potassium channel family. Calcium-activated (TC 1.A.1.3) subfamily. KCa4.1/KCNT1 sub-subfamily. As to quaternary structure, homotetramer; which constitutes the Na(+)-activated K(+) channel. Interacts with KCNT2; these heterodimer channels differ from the homomers in their unitary conductance, kinetic behavior, subcellular localization, and response to activation of protein kinase C. Interacts (via C-terminus) with FMR1; this interaction alters gating properties of KCNT1. Interacts with CRBN via its cytoplasmic C-terminus. Post-translationally, phosphorylated by protein kinase C. Phosphorylation of the C-terminal domain increases channel activity. Enriched in the brainstem and olfactory bulb and detected at significant levels in four different brain regions.

It localises to the cell membrane. It catalyses the reaction K(+)(in) = K(+)(out). Its activity is regulated as follows. Activated by high intracellular Na(+). In addition to activation by Na(+), is cooperatively activated by intracellular Cl(-) levels. Inhibited by Zn(2+). Activated upon stimulation of G-protein coupled receptors, such as CHRM1 and GRIA1. In terms of biological role, sodium-activated K(+) channel. Acts as an important mediator of neuronal membrane excitability. Contributes to the delayed outward currents. Regulates neuronal bursting in sensory neurons. Contributes to synaptic development and plasticity. The polypeptide is Potassium channel subfamily T member 1 (Kcnt1) (Mus musculus (Mouse)).